The chain runs to 65 residues: Subtilisin inhibitor CLSI-I (65 aa).

This sequence belongs to the protease inhibitor I13 (potato type I serine protease inhibitor) family.

Functionally, inhibits subtilisin-type microbial serine proteases including proteinase K, subtilisin BPN', subtilisin Carlsberg, subtilisin E, A.oryzae protease and S.griseus alkaline protease. Weakly inhibits pronase E. Does not inhibit trypsin or chymotrypsin. The sequence is that of Subtilisin inhibitor CLSI-I from Canavalia lineata (Beach bean).